Reading from the N-terminus, the 454-residue chain is Gastrin/cholecystokinin type B receptor (454 aa).

At 1 to 57 the chain is on the extracellular side; it reads MELLKPNRSVLGSGPGPGASLCRSGGPLLNGSGTGNLSCEPPRIRGAGTRELELAIR. 3 N-linked (GlcNAc...) asparagine glycosylation sites follow: Asn-7, Asn-30, and Asn-36. The chain crosses the membrane as a helical span at residues 58-79; sequence VTLYAVIFLMSVGGNVLIIVVL. The Cytoplasmic segment spans residues 80–87; the sequence is GLSRRLRT. Residues 88–109 traverse the membrane as a helical segment; it reads VTNAFLLSLAVSDLLLAVACMP. At 110 to 131 the chain is on the extracellular side; it reads FTLLPNLMGTFIFGTVVCKAVS. The cysteines at positions 127 and 205 are disulfide-linked. Residues 132-150 form a helical membrane-spanning segment; the sequence is YFMGVSVSVSTLSLVAIAL. The Cytoplasmic portion of the chain corresponds to 151–170; that stretch reads ERYSAICRPLQARVWQTRSH. A helical membrane pass occupies residues 171 to 189; the sequence is AARVIVATWMLSGLLMVPY. Over 190–219 the chain is Extracellular; the sequence is PVYTAVQPAGPRVLQCMHRWPSARVRQTWS. Residues 220 to 242 traverse the membrane as a helical segment; that stretch reads VLLLLLLFFVPGVVMAVAYGLIS. Topologically, residues 243–340 are cytoplasmic; it reads RELYLGLRFD…KLLAKKRVVR (98 aa). Residues 257 to 284 form a disordered region; that stretch reads SESQSRVGSQGGLPGGTGQGPAQANGRC. Over residues 265–275 the composition is skewed to gly residues; sequence SQGGLPGGTGQ. Residues 341–362 traverse the membrane as a helical segment; that stretch reads MLLVIVVLFFLCWLPVYSANTW. Over 363 to 380 the chain is Extracellular; that stretch reads RAFDGPGAHRALSGAPIS. A helical membrane pass occupies residues 381–401; the sequence is FIHLLTYASACVNPLVYCFMH. Topologically, residues 402-454 are cytoplasmic; sequence RRFRQACLDTCTRCCPRPPRARPRPLPDEDPPTPSIASLSRLSYTTISTLGPG. The S-palmitoyl cysteine moiety is linked to residue Cys-415. The interval 422-441 is disordered; it reads ARPRPLPDEDPPTPSIASLS.

Belongs to the G-protein coupled receptor 1 family.

The protein localises to the cell membrane. In terms of biological role, receptor for gastrin and cholecystokinin. The CCK-B receptors occur throughout the central nervous system where they modulate anxiety, analgesia, arousal, and neuroleptic activity. This receptor mediates its action by association with G proteins that activate a phosphatidylinositol-calcium second messenger system. This is Gastrin/cholecystokinin type B receptor (CCKBR) from Bos taurus (Bovine).